A 298-amino-acid chain; its full sequence is Isochorismatase domain-containing protein 1 (298 aa).

A Phosphotyrosine modification is found at tyrosine 160. An N6-succinyllysine modification is found at lysine 279.

The protein belongs to the isochorismatase family.

The protein is Isochorismatase domain-containing protein 1 (ISOC1) of Homo sapiens (Human).